Reading from the N-terminus, the 560-residue chain is Probable 2,3-bisphosphoglycerate-independent phosphoglycerate mutase 2 (560 aa).

At glycine 2 the chain carries N-acetylglycine. 2 residues coordinate Mn(2+): aspartate 29 and serine 82. Serine 82 acts as the Phosphoserine intermediate in catalysis. Substrate contacts are provided by residues histidine 141, 171–172 (RD), arginine 207, arginine 214, 287–290 (RADR), and lysine 362. Mn(2+) contacts are provided by aspartate 431, histidine 435, aspartate 472, histidine 473, and histidine 502.

The protein belongs to the BPG-independent phosphoglycerate mutase family. As to quaternary structure, monomer. The cofactor is Mn(2+).

It localises to the cytoplasm. The enzyme catalyses (2R)-2-phosphoglycerate = (2R)-3-phosphoglycerate. It participates in carbohydrate degradation; glycolysis; pyruvate from D-glyceraldehyde 3-phosphate: step 3/5. Functionally, catalyzes the interconversion of 2-phosphoglycerate (2-PGA) and 3-phosphoglycerate (3-PGA). Required for guard cell function (e.g. blue light-, abscisic acid- (ABA), and low CO(2)-regulated stomatal movements) and fertility (e.g. pollen grains production). This is Probable 2,3-bisphosphoglycerate-independent phosphoglycerate mutase 2 (PGM2) from Arabidopsis thaliana (Mouse-ear cress).